The primary structure comprises 351 residues: Ribosomal RNA small subunit methyltransferase H (351 aa).

S-adenosyl-L-methionine-binding positions include 48-50 (GGY), D67, F94, D115, and Q122. The segment at 298–351 (GPVLPSEAETEVNPRARSAKLRAGERTDGPAPPPLSAIETLASLPAPQGRGTRR) is disordered.

It belongs to the methyltransferase superfamily. RsmH family.

It is found in the cytoplasm. It carries out the reaction cytidine(1402) in 16S rRNA + S-adenosyl-L-methionine = N(4)-methylcytidine(1402) in 16S rRNA + S-adenosyl-L-homocysteine + H(+). In terms of biological role, specifically methylates the N4 position of cytidine in position 1402 (C1402) of 16S rRNA. This Methylorubrum populi (strain ATCC BAA-705 / NCIMB 13946 / BJ001) (Methylobacterium populi) protein is Ribosomal RNA small subunit methyltransferase H.